Reading from the N-terminus, the 643-residue chain is Threonine--tRNA ligase (643 aa).

The 61-residue stretch at 1–61 (MPIITLPDGS…EQDATLEIIT (61 aa)) folds into the TGS domain. The tract at residues 243-534 (DHRKIGKALD…ITEEYAGFFP (292 aa)) is catalytic. Positions 334, 385, and 511 each coordinate Zn(2+).

The protein belongs to the class-II aminoacyl-tRNA synthetase family. In terms of assembly, homodimer. Requires Zn(2+) as cofactor.

The protein resides in the cytoplasm. It carries out the reaction tRNA(Thr) + L-threonine + ATP = L-threonyl-tRNA(Thr) + AMP + diphosphate + H(+). Catalyzes the attachment of threonine to tRNA(Thr) in a two-step reaction: L-threonine is first activated by ATP to form Thr-AMP and then transferred to the acceptor end of tRNA(Thr). Also edits incorrectly charged L-seryl-tRNA(Thr). In Haemophilus influenzae (strain PittEE), this protein is Threonine--tRNA ligase.